The following is a 154-amino-acid chain: MSISSGSFAQPAAVVSSPGVTVPEPVASTPTMAELLQQPVYKARWQKMVKGQKNLPAWARKGAGTSGPYENITWGAQQYKVGSLCKPHDCSNNFMWVAFSNDKKHVWGLRVTVADKPEALDNPSKFATYQWLGRPNENIQAMLTAQLEKDPNWR.

An N-terminal signal peptide occupies residues 1 to 21 (MSISSGSFAQPAAVVSSPGVT).

The protein belongs to the ivy family.

It is found in the periplasm. This is an uncharacterized protein from Yersinia pestis.